A 275-amino-acid polypeptide reads, in one-letter code: Membrane protein insertase MisCB (275 aa).

The signal sequence occupies residues 1–18 (MLKTYQKLLAMGIFLIVL). Cysteine 19 is lipidated: N-palmitoyl cysteine. Cysteine 19 is lipidated: S-diacylglycerol cysteine. 5 helical membrane passes run 63–83 (YGLS…PLFV), 139–159 (AMGC…YYAI), 172–192 (WFSL…MYFV), 219–239 (LMVF…PAAL), and 240–260 (PLYW…LQMT).

It belongs to the OXA1/ALB3/YidC family. Type 2 subfamily. As to quaternary structure, mostly monomeric, it may also form dimers. Interacts with SpoIIIAE. Forms a complex with the F(1)F(0) ATP synthase in which can be found the alpha, beta, gamma, delta and epsilon subunits of F(1) and a, b and subunits of F(0). YqgA is found in the same complex.

It is found in the cell membrane. Functionally, required for the insertion and/or proper folding and/or complex formation of integral membrane proteins into the membrane. Involved in integration of membrane proteins that insert both dependently and independently of the Sec translocase complex, as well as at least some lipoproteins. Also involved in protein secretion processes. It has an overlapping, although partly distinct, function compared to SpoIIIJ(MisCB). This chain is Membrane protein insertase MisCB (misCB), found in Bacillus subtilis (strain 168).